The following is a 385-amino-acid chain: S-adenosylmethionine synthase (385 aa).

His16 provides a ligand contact to ATP. Asp18 lines the Mg(2+) pocket. Glu44 is a binding site for K(+). 2 residues coordinate L-methionine: Glu57 and Gln100. Residues 100–110 (QSPDINQGVDK) form a flexible loop region. Residues 165–167 (DAK), 231–232 (RF), Asp240, 246–247 (RK), Ala263, and Lys267 contribute to the ATP site. Asp240 contributes to the L-methionine binding site. L-methionine is bound at residue Lys271.

The protein belongs to the AdoMet synthase family. In terms of assembly, homotetramer; dimer of dimers. The cofactor is Mg(2+). It depends on K(+) as a cofactor.

Its subcellular location is the cytoplasm. It catalyses the reaction L-methionine + ATP + H2O = S-adenosyl-L-methionine + phosphate + diphosphate. Its pathway is amino-acid biosynthesis; S-adenosyl-L-methionine biosynthesis; S-adenosyl-L-methionine from L-methionine: step 1/1. Catalyzes the formation of S-adenosylmethionine (AdoMet) from methionine and ATP. The overall synthetic reaction is composed of two sequential steps, AdoMet formation and the subsequent tripolyphosphate hydrolysis which occurs prior to release of AdoMet from the enzyme. This Vibrio cholerae serotype O1 (strain ATCC 39541 / Classical Ogawa 395 / O395) protein is S-adenosylmethionine synthase.